We begin with the raw amino-acid sequence, 170 residues long: MARVEL domain-containing protein 1 (170 aa).

Residues 1–38 (MEGERPRSDTVTTTVSSHMETISLGGSIAYDRSFLRSP) are Cytoplasmic-facing. An MARVEL domain is found at 34–167 (FLRSPTGVLL…STYFSFQAWR (134 aa)). A helical membrane pass occupies residues 39-59 (TGVLLLMEIMFGLLVWALIAG). The Extracellular segment spans residues 60 to 67 (SEYFLFSA). A helical transmembrane segment spans residues 68 to 88 (FGWVMFVAVFYWVLSVFFFLL). Residues 89–102 (HLTRANTRITKVPW) lie on the Cytoplasmic side of the membrane. A helical transmembrane segment spans residues 103-123 (SLVGLCFNGSAFVLYLIAAVV). Over 124-145 (EASSVNKDVHQHHNYNSWTASS) the chain is Extracellular. A helical membrane pass occupies residues 146–166 (FFAFIVTVCYALSTYFSFQAW). Residues 167 to 170 (RTKS) lie on the Cytoplasmic side of the membrane.

The protein resides in the membrane. It localises to the nucleus. The sequence is that of MARVEL domain-containing protein 1 (marveld1) from Xenopus laevis (African clawed frog).